Consider the following 215-residue polypeptide: T-complex protein 10A homolog 1 (215 aa).

A disordered region spans residues 1–25 (MLAGQLEARDPKEGTHPEDPCPGAG). A compositionally biased stretch (basic and acidic residues) spans 7–19 (EARDPKEGTHPED). A coiled-coil region spans residues 69 to 110 (ADVHGKLRSHIDALREQNMELREKLRALQLQRWKARKKSAAS). The segment at 75–96 (LRSHIDALREQNMELREKLRAL) is leucine-zipper. The span at 150–163 (ATLLGQRSSSNNSA) shows a compositional bias: polar residues. The disordered stretch occupies residues 150–215 (ATLLGQRSSS…TPCAERRGGV (66 aa)).

Belongs to the TCP10 family. In terms of assembly, self-associates (via leucine zipper). Interacts (via leucine zipper) with ZIPK/DAPK3 (via leucine zipper). Interacts with MAD4. In terms of tissue distribution, expressed in liver and testis. Expressed in the seminiferous tubules (at protein level).

The protein resides in the nucleus. Functionally, may be involved in transcriptional regulation. Has in vitro transcription inhibition activity. Acts as a tumor suppressor in hepatocellular carcinoma (HCC) cells. This chain is T-complex protein 10A homolog 1 (TCP10L), found in Homo sapiens (Human).